The chain runs to 431 residues: Trigger factor (431 aa).

Residues 161–246 form the PPIase FKBP-type domain; it reads DDRVTIDFVG…LKKVENIVLP (86 aa).

The protein belongs to the FKBP-type PPIase family. Tig subfamily.

Its subcellular location is the cytoplasm. It carries out the reaction [protein]-peptidylproline (omega=180) = [protein]-peptidylproline (omega=0). Its function is as follows. Involved in protein export. Acts as a chaperone by maintaining the newly synthesized protein in an open conformation. Functions as a peptidyl-prolyl cis-trans isomerase. The polypeptide is Trigger factor (Glaesserella parasuis serovar 5 (strain SH0165) (Haemophilus parasuis)).